The chain runs to 261 residues: 14-3-3-like protein GF14-12 (261 aa).

The protein belongs to the 14-3-3 family.

Is associated with a DNA binding complex to bind to the G box, a well-characterized cis-acting DNA regulatory element found in plant genes. The protein is 14-3-3-like protein GF14-12 (GRF2) of Zea mays (Maize).